Reading from the N-terminus, the 212-residue chain is uncharacterized protein (212 aa).

This is an uncharacterized protein from Dryophytes versicolor (chameleon treefrog).